Here is a 304-residue protein sequence, read N- to C-terminus: tRNA dimethylallyltransferase (304 aa).

Position 8-15 (8-15 (GPTASGKS)) interacts with ATP. 10-15 (TASGKS) contacts substrate. The interaction with substrate tRNA stretch occupies residues 33-36 (DSRQ).

It belongs to the IPP transferase family. Monomer. Mg(2+) serves as cofactor.

It catalyses the reaction adenosine(37) in tRNA + dimethylallyl diphosphate = N(6)-dimethylallyladenosine(37) in tRNA + diphosphate. In terms of biological role, catalyzes the transfer of a dimethylallyl group onto the adenine at position 37 in tRNAs that read codons beginning with uridine, leading to the formation of N6-(dimethylallyl)adenosine (i(6)A). The protein is tRNA dimethylallyltransferase of Chlorobium luteolum (strain DSM 273 / BCRC 81028 / 2530) (Pelodictyon luteolum).